The following is a 398-amino-acid chain: Succinate--CoA ligase [ADP-forming] subunit beta (398 aa).

Residues 9–254 enclose the ATP-grasp domain; the sequence is KRLLHTYGAP…LTEEDPKEIE (246 aa). Residues lysine 46, 53–55, glutamate 109, alanine 112, and glutamate 117 each bind ATP; that span reads GRG. The Mg(2+) site is built by asparagine 209 and aspartate 223. Residues asparagine 274 and 331–333 each bind substrate; that span reads GIM.

This sequence belongs to the succinate/malate CoA ligase beta subunit family. Heterotetramer of two alpha and two beta subunits. It depends on Mg(2+) as a cofactor.

The enzyme catalyses succinate + ATP + CoA = succinyl-CoA + ADP + phosphate. It catalyses the reaction GTP + succinate + CoA = succinyl-CoA + GDP + phosphate. The protein operates within carbohydrate metabolism; tricarboxylic acid cycle; succinate from succinyl-CoA (ligase route): step 1/1. In terms of biological role, succinyl-CoA synthetase functions in the citric acid cycle (TCA), coupling the hydrolysis of succinyl-CoA to the synthesis of either ATP or GTP and thus represents the only step of substrate-level phosphorylation in the TCA. The beta subunit provides nucleotide specificity of the enzyme and binds the substrate succinate, while the binding sites for coenzyme A and phosphate are found in the alpha subunit. This Brucella abortus (strain S19) protein is Succinate--CoA ligase [ADP-forming] subunit beta.